The sequence spans 97 residues: Co-chaperonin GroES (97 aa).

The protein belongs to the GroES chaperonin family. Heptamer of 7 subunits arranged in a ring. Interacts with the chaperonin GroEL.

The protein resides in the cytoplasm. In terms of biological role, together with the chaperonin GroEL, plays an essential role in assisting protein folding. The GroEL-GroES system forms a nano-cage that allows encapsulation of the non-native substrate proteins and provides a physical environment optimized to promote and accelerate protein folding. GroES binds to the apical surface of the GroEL ring, thereby capping the opening of the GroEL channel. The sequence is that of Co-chaperonin GroES from Bifidobacterium longum (strain NCC 2705).